The sequence spans 640 residues: Zinc finger and BTB domain-containing protein 22 (640 aa).

The region spanning 57 to 121 (CDVSIRVQGR…AYTGRLSMAA (65 aa)) is the BTB domain. 3 disordered regions span residues 191–244 (RSHA…PVFP), 308–327 (PAPA…EEED), and 332–482 (CEDD…GGTG). Polar residues predominate over residues 192–210 (SHASSRASENQSPSSSNYF). Phosphoserine is present on Ser203. Over residues 318–327 (PDLEEDEEED) the composition is skewed to acidic residues. Residues 431 to 442 (SSSSSSSSSSSS) are compositionally biased toward low complexity. The segment covering 469–482 (GMPGGPGGTPGGTG) has biased composition (gly residues). Residues 490 to 511 (FLCHCGKAFSHKSMRDRHVNMH) form a C2H2-type 1; atypical zinc finger. 2 C2H2-type zinc fingers span residues 517 to 539 (FDCP…MKTH) and 545 to 571 (YECG…ERRH). The segment at 571 to 640 (HRLVGGGGGG…MGFGGGGGTN (70 aa)) is disordered. Residues 574 to 588 (VGGGGGGGPGPGGPT) are compositionally biased toward gly residues.

This sequence belongs to the krueppel C2H2-type zinc-finger protein family.

The protein localises to the nucleus. In terms of biological role, may be involved in transcriptional regulation. This Canis lupus familiaris (Dog) protein is Zinc finger and BTB domain-containing protein 22 (ZBTB22).